The chain runs to 170 residues: Adenine phosphoribosyltransferase (170 aa).

The protein belongs to the purine/pyrimidine phosphoribosyltransferase family. In terms of assembly, homodimer.

The protein localises to the cytoplasm. It carries out the reaction AMP + diphosphate = 5-phospho-alpha-D-ribose 1-diphosphate + adenine. Its pathway is purine metabolism; AMP biosynthesis via salvage pathway; AMP from adenine: step 1/1. In terms of biological role, catalyzes a salvage reaction resulting in the formation of AMP, that is energically less costly than de novo synthesis. The sequence is that of Adenine phosphoribosyltransferase from Streptococcus pneumoniae (strain Taiwan19F-14).